A 243-amino-acid polypeptide reads, in one-letter code: Protein unc-119 homolog B (243 aa).

The segment covering 1–21 has biased composition (polar residues); it reads MNSQSSRNETAATAVNGSDSA. Residues 1–49 form a disordered region; it reads MNSQSSRNETAATAVNGSDSAAASRDHKSGGGVLKRLKSRRNQVDRRPV. Tyr-134 provides a ligand contact to tetradecanoate.

The protein belongs to the PDE6D/unc-119 family. Detected in embryo. Detected in larvae four days after fertilization, in retina and neural tissues (at protein level). Detected in embryos at the sphere stage, during gastrulation, somitogenesis and in swimming larvae, both within and outside of the developing nervous system. Detected in adults.

It localises to the cell projection. Its subcellular location is the cilium. In terms of biological role, myristoyl-binding protein that acts as a cargo adapter: specifically binds the myristoyl moiety of a subset of N-terminally myristoylated proteins and is required for their localization. Plays a key role in localization of proteins to the primary cilium membrane. In Danio rerio (Zebrafish), this protein is Protein unc-119 homolog B (unc119b).